The following is a 368-amino-acid chain: MNLPIEQYADLLAEKAKNLTALLAPFNPPELEVFESETGHFRMRAEFRVWHDTNEVGENELYHIMFDQETKQRYCVEQFPIANHLINKMMSSLLAEIKGNELLTRKLFQVDYLSTLSGEIAVSMLYHKKLNEEWQAEAAALKARLEHQGFKVQIIGRATKQKIALDRDYVEEVLPVDGRNLIYRQVENSFTQPNAKMNIKMLEWARSCTRHSSGDLLELYCGNGNFSIALAENFRKVLATEISKSSVQSAQYNIEQNGIDNLQIIRMSAEEFTQAMNGVREFNRLKGIDLKAYDCNTIFVDPPRAGLDQDTLNMVQAYERILYISCNPYTLAENLRQLSLTHRIERAALFDQFPYTHHVESGVWLIRK.

Positions 192, 220, 225, 241, and 301 each coordinate S-adenosyl-L-methionine. The active-site Nucleophile is Cys-326. Catalysis depends on Glu-360, which acts as the Proton acceptor.

The protein belongs to the class I-like SAM-binding methyltransferase superfamily. RNA M5U methyltransferase family. TrmA subfamily.

The enzyme catalyses uridine(54) in tRNA + S-adenosyl-L-methionine = 5-methyluridine(54) in tRNA + S-adenosyl-L-homocysteine + H(+). It catalyses the reaction uridine(341) in tmRNA + S-adenosyl-L-methionine = 5-methyluridine(341) in tmRNA + S-adenosyl-L-homocysteine + H(+). Dual-specificity methyltransferase that catalyzes the formation of 5-methyluridine at position 54 (m5U54) in all tRNAs, and that of position 341 (m5U341) in tmRNA (transfer-mRNA). The polypeptide is tRNA/tmRNA (uracil-C(5))-methyltransferase (Actinobacillus pleuropneumoniae serotype 5b (strain L20)).